Here is a 318-residue protein sequence, read N- to C-terminus: MRLLAGWLCLSLASVWLARRMWTLRSPLTRSLYVNMTSGPGGPAAAAGGRKENHQWYVCNREKLCESLQAVFVQSYLDQGTQIFLNNSIEKSGWLFIQLYHSFVSSVFSLFMSRTSINGLLGRGSMFVFSPDQFQRLLKINPDWKTHRLLDLGAGDGEVTKIMSPHFEEIYATELSETMIWQLQKKKYRVLGINEWQNTGFQYDVISCLNLLDRCDQPLTLLKDIRSVLEPTRGRVILALVLPFHPYVENVGGKWEKPSEILEIKGQNWEEQVNSLPEVFRKAGFVIEAFTRLPYLCEGDMYNDYYVLDDAVFVLKPV.

The N-terminal stretch at 1–18 (MRLLAGWLCLSLASVWLA) is a signal peptide. N-linked (GlcNAc...) asparagine glycosylation is present at Asn-35. Residues Glu-174, Asn-210, and Tyr-295 each coordinate S-adenosyl-L-homocysteine.

It belongs to the METTL9 family.

Its subcellular location is the endoplasmic reticulum. The protein resides in the mitochondrion. The enzyme catalyses L-histidyl-[protein] + S-adenosyl-L-methionine = N(pros)-methyl-L-histidyl-[protein] + S-adenosyl-L-homocysteine + H(+). Functionally, protein-histidine N-methyltransferase that specifically catalyzes 1-methylhistidine (pros-methylhistidine) methylation of target proteins. Specifically methylates the second His of proteins with a His-x-His (HxH) motif (where 'x' is preferably a small amino acid), while exploiting the first one as a recognition signature. Catalyzes methylation of target proteins such as S100A9, NDUFB3, SLC39A5, SLC39A7, ARMC6 and DNAJB12; 1-methylhistidine modification may affect the binding of zinc and other metals to its target proteins. Constitutes the main methyltransferase for the 1-methylhistidine modification in cell. The protein is Protein-L-histidine N-pros-methyltransferase of Homo sapiens (Human).